The sequence spans 338 residues: Nucleoid-associated protein PM1885 (338 aa).

The protein belongs to the YejK family.

The protein localises to the cytoplasm. The protein resides in the nucleoid. This chain is Nucleoid-associated protein PM1885, found in Pasteurella multocida (strain Pm70).